A 197-amino-acid polypeptide reads, in one-letter code: Peptidyl-tRNA hydrolase (197 aa).

Tyr18 serves as a coordination point for tRNA. His23 acts as the Proton acceptor in catalysis. 3 residues coordinate tRNA: Phe69, Asn71, and Asn117.

Belongs to the PTH family. Monomer.

Its subcellular location is the cytoplasm. The catalysed reaction is an N-acyl-L-alpha-aminoacyl-tRNA + H2O = an N-acyl-L-amino acid + a tRNA + H(+). Functionally, hydrolyzes ribosome-free peptidyl-tRNAs (with 1 or more amino acids incorporated), which drop off the ribosome during protein synthesis, or as a result of ribosome stalling. Its function is as follows. Catalyzes the release of premature peptidyl moieties from peptidyl-tRNA molecules trapped in stalled 50S ribosomal subunits, and thus maintains levels of free tRNAs and 50S ribosomes. The sequence is that of Peptidyl-tRNA hydrolase from Psychromonas ingrahamii (strain DSM 17664 / CCUG 51855 / 37).